The sequence spans 188 residues: MAERANDIRPGQVLEHNGGLFLVVSIMHTQPGKGGAYIQAEMKNIKTGAKLYERFRSDATIRRAILDEEEYIYLFTEGNIVNLMHPSNYEQITINLDLLEEKKIYLQDNMRIKVVTYQDKIIFAHVPDYVRLTVKETESFIKGQTITSSYKPAVLENGMRINVPQFIKEEDKIVVYTPDDSYYERVKE.

This sequence belongs to the elongation factor P family.

The protein localises to the cytoplasm. Its pathway is protein biosynthesis; polypeptide chain elongation. Functionally, involved in peptide bond synthesis. Stimulates efficient translation and peptide-bond synthesis on native or reconstituted 70S ribosomes in vitro. Probably functions indirectly by altering the affinity of the ribosome for aminoacyl-tRNA, thus increasing their reactivity as acceptors for peptidyl transferase. This is Elongation factor P from Wolbachia sp. subsp. Brugia malayi (strain TRS).